Reading from the N-terminus, the 515-residue chain is NAD(P)H-quinone oxidoreductase subunit 2 (515 aa).

The next 14 membrane-spanning stretches (helical) occupy residues 14–34 (TILP…ADLI), 42–62 (WTPY…IPLW), 79–99 (LSLF…LMSI), 109–128 (LGEF…FIAG), 132–151 (LVFI…LLTG), 167–187 (LLIG…LYGL), 206–226 (LGLV…ISAV), 240–260 (PTPV…ALAI), 274–294 (WQLI…VVAL), 302–322 (MLAY…VVGT), 330–350 (LFYL…VILF), 374–394 (LGLS…GFFG), 396–416 (IYLF…LGLL), and 462–482 (VGLV…NPLF).

It belongs to the complex I subunit 2 family. As to quaternary structure, NDH-1 can be composed of about 15 different subunits; different subcomplexes with different compositions have been identified which probably have different functions.

The protein resides in the cellular thylakoid membrane. It carries out the reaction a plastoquinone + NADH + (n+1) H(+)(in) = a plastoquinol + NAD(+) + n H(+)(out). The enzyme catalyses a plastoquinone + NADPH + (n+1) H(+)(in) = a plastoquinol + NADP(+) + n H(+)(out). NDH-1 shuttles electrons from an unknown electron donor, via FMN and iron-sulfur (Fe-S) centers, to quinones in the respiratory and/or the photosynthetic chain. The immediate electron acceptor for the enzyme in this species is believed to be plastoquinone. Couples the redox reaction to proton translocation, and thus conserves the redox energy in a proton gradient. Cyanobacterial NDH-1 also plays a role in inorganic carbon-concentration. The polypeptide is NAD(P)H-quinone oxidoreductase subunit 2 (Thermosynechococcus vestitus (strain NIES-2133 / IAM M-273 / BP-1)).